Consider the following 301-residue polypeptide: Cytidine deaminase 1 (301 aa).

2 consecutive CMP/dCMP-type deaminase domains span residues 23–156 and 188–301; these read SVIQ…FGPD and DSSA…CYEA. 64–66 provides a ligand contact to substrate; it reads NVE. A Zn(2+)-binding site is contributed by His-77. The Proton donor role is filled by Glu-79. Zn(2+) contacts are provided by Cys-104 and Cys-107.

It belongs to the cytidine and deoxycytidylate deaminase family. Homodimer. Zn(2+) serves as cofactor. In terms of tissue distribution, expressed in roots, rosette leaves, stems and flowers.

The catalysed reaction is cytidine + H2O + H(+) = uridine + NH4(+). The enzyme catalyses 2'-deoxycytidine + H2O + H(+) = 2'-deoxyuridine + NH4(+). Its activity is regulated as follows. Inhibited by uridine, CMP and dCMP. This enzyme scavenges exogenous and endogenous cytidine and 2'-deoxycytidine for UMP synthesis. Functions as a conventional cytidine deaminase. Has no affinity for RNA and is not involved in RNA-editing by C-to-U deamination. In Arabidopsis thaliana (Mouse-ear cress), this protein is Cytidine deaminase 1 (CDA1).